We begin with the raw amino-acid sequence, 131 residues long: Small ribosomal subunit protein bS6 (131 aa).

The disordered stretch occupies residues 98–131 (EASPMVKAKDERRERRDDFANETADDSDAGDSEE). Basic and acidic residues predominate over residues 104-116 (KAKDERRERRDDF). Residues 120–131 (TADDSDAGDSEE) are compositionally biased toward acidic residues.

Belongs to the bacterial ribosomal protein bS6 family.

In terms of biological role, binds together with bS18 to 16S ribosomal RNA. The protein is Small ribosomal subunit protein bS6 of Enterobacter sp. (strain 638).